The sequence spans 138 residues: Basic phospholipase A2 homolog Vur-S49 (138 aa).

An N-terminal signal peptide occupies residues 1–16; sequence MRALWIVAVCLIGVEG. 7 disulfide bridges follow: C42/C131, C44/C60, C59/C111, C65/C138, C66/C104, C73/C97, and C91/C102. An important for membrane-damaging activities in eukaryotes and bacteria; heparin-binding region spans residues 121–133; that stretch reads KKYKVYLRFKCKG.

The protein belongs to the phospholipase A2 family. Group II subfamily. S49 sub-subfamily. Expressed by the venom gland.

It localises to the secreted. Its function is as follows. Snake venom phospholipase A2 homolog that lacks enzymatic activity. Is able to suppress the acetylcholine (ACh)-evoked current mediated by alpha-7 (CHRNA7)-similar nAChRs in L.stagnalis neurons (IC(50)=2.18 uM). This activity is only partially reversible and seems to be non-competitive. This Vipera renardi (Steppe viper) protein is Basic phospholipase A2 homolog Vur-S49.